The primary structure comprises 1342 residues: DNA-directed RNA polymerase subunit beta (1342 aa).

N6-acetyllysine occurs at positions 1022 and 1200.

The protein belongs to the RNA polymerase beta chain family. As to quaternary structure, the RNAP catalytic core consists of 2 alpha, 1 beta, 1 beta' and 1 omega subunit. When a sigma factor is associated with the core the holoenzyme is formed, which can initiate transcription.

It catalyses the reaction RNA(n) + a ribonucleoside 5'-triphosphate = RNA(n+1) + diphosphate. Its function is as follows. DNA-dependent RNA polymerase catalyzes the transcription of DNA into RNA using the four ribonucleoside triphosphates as substrates. The chain is DNA-directed RNA polymerase subunit beta from Escherichia fergusonii (strain ATCC 35469 / DSM 13698 / CCUG 18766 / IAM 14443 / JCM 21226 / LMG 7866 / NBRC 102419 / NCTC 12128 / CDC 0568-73).